A 232-amino-acid chain; its full sequence is Putative N-acetylmannosamine-6-phosphate 2-epimerase (232 aa).

The protein belongs to the NanE family.

The catalysed reaction is an N-acyl-D-glucosamine 6-phosphate = an N-acyl-D-mannosamine 6-phosphate. The protein operates within amino-sugar metabolism; N-acetylneuraminate degradation; D-fructose 6-phosphate from N-acetylneuraminate: step 3/5. Its function is as follows. Converts N-acetylmannosamine-6-phosphate (ManNAc-6-P) to N-acetylglucosamine-6-phosphate (GlcNAc-6-P). The chain is Putative N-acetylmannosamine-6-phosphate 2-epimerase from Proteus mirabilis (strain HI4320).